A 751-amino-acid polypeptide reads, in one-letter code: SKI family transcriptional corepressor 1 homolog-B (751 aa).

Disordered regions lie at residues 1-30, 234-267, 386-434, 459-569, and 600-635; these read MESIPNQLPAGRDSSCSPNSKDLQSYSGPP, SRKRTLPIGRSESSPSQPPRGQTQGEPSDVPHKT, LDVS…GIPP, YGNR…HGNK, and QRETSVKDVHEEEPSSTVEEMEPKNHQDENNISEER. 2 stretches are compositionally biased toward polar residues: residues 14 to 27 and 244 to 259; these read SSCSPNSKDLQSYS and SESSPSQPPRGQTQGE. Over residues 416–428 the composition is skewed to basic and acidic residues; the sequence is RNEEDKSGDESRS. Positions 479–491 are enriched in low complexity; it reads SESSSYRSVSPDV. The span at 539 to 558 shows a compositional bias: polar residues; sequence QENTQMHTLNDLHSTNSSET. Basic and acidic residues-rich tracts occupy residues 559-569, 603-612, and 620-635; these read RPSDMESHGNK, TSVKDVHEEE, and MEPKNHQDENNISEER. The stretch at 666 to 704 forms a coiled coil; it reads SMAKEELQKQLVEQVELRKKLEREFQNLKDSFQDQMKRE.

It belongs to the SKI family.

Its subcellular location is the nucleus. Functionally, may inhibit BMP signaling. The sequence is that of SKI family transcriptional corepressor 1 homolog-B (skor1b) from Danio rerio (Zebrafish).